The primary structure comprises 207 residues: 5-amino-6-(5-phosphoribosylamino)uracil reductase (207 aa).

Ser-6 contacts substrate. Residue Trp-8 coordinates NADP(+). A substrate-binding site is contributed by Arg-22. Asp-38 is an NADP(+) binding site. Residues Leu-42 and Arg-45 each contribute to the substrate site. Ser-72 contributes to the NADP(+) binding site. Position 137 (Glu-137) interacts with substrate.

The protein belongs to the HTP reductase family.

It catalyses the reaction 5-amino-6-(5-phospho-D-ribitylamino)uracil + NADP(+) = 5-amino-6-(5-phospho-D-ribosylamino)uracil + NADPH + H(+). Its pathway is cofactor biosynthesis; riboflavin biosynthesis; 5-amino-6-(D-ribitylamino)uracil from GTP: step 3/4. The polypeptide is 5-amino-6-(5-phosphoribosylamino)uracil reductase (ribD2) (Buchnera aphidicola subsp. Acyrthosiphon pisum (strain APS) (Acyrthosiphon pisum symbiotic bacterium)).